A 468-amino-acid polypeptide reads, in one-letter code: MTQQIGVIGLAVMGKNLAWNIESHGYSVSVFNRSSEKTDLMVEESKGKNIHPTYSLEEFVNSLEKPRKILLMVQAGKATDATIDSLLPLLDDGDILIDGGNTNYQDTIRRNKALAQSAINFIGMGVSGGEIGALTGPSLMPGGQEEAYNKVADILDAIAAKAKDGASCVTYIGPNGAGHYVKMVHNGIEYADMQLIAESYAMMKELLGMSHEDIAQTFKDWNAGELESYLIEITGDIFMKLDENKEALVEKILDTAGQKGTGKWTSINALELGIPLTIITESVFARFISSIKEERVNASKELNGPKASFDGDKKDFLEKIRKALYMSKICSYAQGFAQMRKASEDNEWNLKLGDLAMIWREGCIIRAQFLQKIKDAYDNNPGLQNLLLDPYFKNIVTEYQDALRDVVATGVQNGVPTPGFSSSINYYDSYRAADLPANLIQAQRDYFGAHTYERKDKEGVFHTQWIEE.

NADP(+) contacts are provided by residues 9–14 (GLAVMG), 32–34 (NRS), 73–75 (VQA), and asparagine 101. Substrate-binding positions include asparagine 101 and 127-129 (SGG). Residue lysine 182 is the Proton acceptor of the active site. A substrate-binding site is contributed by 185–186 (HN). The active-site Proton donor is glutamate 189. Substrate contacts are provided by tyrosine 190, lysine 259, arginine 286, arginine 444, and histidine 450.

It belongs to the 6-phosphogluconate dehydrogenase family. As to quaternary structure, homodimer.

The enzyme catalyses 6-phospho-D-gluconate + NADP(+) = D-ribulose 5-phosphate + CO2 + NADPH. It participates in carbohydrate degradation; pentose phosphate pathway; D-ribulose 5-phosphate from D-glucose 6-phosphate (oxidative stage): step 3/3. Its function is as follows. Catalyzes the oxidative decarboxylation of 6-phosphogluconate to ribulose 5-phosphate and CO(2), with concomitant reduction of NADP to NADPH. This is 6-phosphogluconate dehydrogenase, decarboxylating (gnd) from Staphylococcus aureus (strain Mu50 / ATCC 700699).